A 105-amino-acid chain; its full sequence is Small ribosomal subunit protein uS10 (105 aa).

The protein belongs to the universal ribosomal protein uS10 family. In terms of assembly, part of the 30S ribosomal subunit.

In terms of biological role, involved in the binding of tRNA to the ribosomes. The sequence is that of Small ribosomal subunit protein uS10 from Chlamydia muridarum (strain MoPn / Nigg).